A 470-amino-acid chain; its full sequence is Neuraminidase (470 aa).

Residues 1-6 are Intravirion-facing; sequence MNPNQK. Residues 7-27 form a helical membrane-spanning segment; it reads IITIGSICMAIGIISLILQIG. Positions 11-33 are involved in apical transport and lipid raft association; sequence GSICMAIGIISLILQIGNIISIW. Residues 28 to 470 are Virion surface-facing; that stretch reads NIISIWVSHS…GAELPFTIDK (443 aa). The hypervariable stalk region stretch occupies residues 36–90; the sequence is HSIQTGSQNHTGICNQRIITYENSTWVNQTYVNISNTNVVAGKDTTSMTLAGNSS. 5 N-linked (GlcNAc...) asparagine; by host glycosylation sites follow: N44, N58, N63, N68, and N88. The segment at 91–470 is head of neuraminidase; the sequence is LCPIRGWAIY…GAELPFTIDK (380 aa). 8 disulfide bridges follow: C92-C417, C124-C129, C184-C231, C233-C238, C279-C292, C281-C290, C318-C335, and C421-C447. R118 contributes to the substrate binding site. N146 is a glycosylation site (N-linked (GlcNAc...) asparagine; by host). D151 functions as the Proton donor/acceptor in the catalytic mechanism. R152 provides a ligand contact to substrate. N235 carries an N-linked (GlcNAc...) asparagine; by host glycan. 277–278 is a binding site for substrate; it reads EE. R293 lines the substrate pocket. Residues D294, G298, and D324 each contribute to the Ca(2+) site. N365 carries N-linked (GlcNAc...) asparagine; by host glycosylation. A substrate-binding site is contributed by R368. Y402 (nucleophile) is an active-site residue. N455 carries N-linked (GlcNAc...) asparagine; by host glycosylation.

The protein belongs to the glycosyl hydrolase 34 family. In terms of assembly, homotetramer. Requires Ca(2+) as cofactor. In terms of processing, N-glycosylated.

The protein localises to the virion membrane. It localises to the host apical cell membrane. It catalyses the reaction Hydrolysis of alpha-(2-&gt;3)-, alpha-(2-&gt;6)-, alpha-(2-&gt;8)- glycosidic linkages of terminal sialic acid residues in oligosaccharides, glycoproteins, glycolipids, colominic acid and synthetic substrates.. With respect to regulation, inhibited by the neuraminidase inhibitors zanamivir (Relenza) and oseltamivir (Tamiflu). These drugs interfere with the release of progeny virus from infected cells and are effective against all influenza strains. Resistance to neuraminidase inhibitors is quite rare. In terms of biological role, catalyzes the removal of terminal sialic acid residues from viral and cellular glycoconjugates. Cleaves off the terminal sialic acids on the glycosylated HA during virus budding to facilitate virus release. Additionally helps virus spread through the circulation by further removing sialic acids from the cell surface. These cleavages prevent self-aggregation and ensure the efficient spread of the progeny virus from cell to cell. Otherwise, infection would be limited to one round of replication. Described as a receptor-destroying enzyme because it cleaves a terminal sialic acid from the cellular receptors. May facilitate viral invasion of the upper airways by cleaving the sialic acid moieties on the mucin of the airway epithelial cells. Likely to plays a role in the budding process through its association with lipid rafts during intracellular transport. May additionally display a raft-association independent effect on budding. Plays a role in the determination of host range restriction on replication and virulence. Sialidase activity in late endosome/lysosome traffic seems to enhance virus replication. This chain is Neuraminidase, found in Aves (Human).